The chain runs to 327 residues: Aspartate carbamoyltransferase catalytic subunit (327 aa).

Positions 67 and 68 each coordinate carbamoyl phosphate. K95 lines the L-aspartate pocket. The carbamoyl phosphate site is built by R117, H145, and Q148. Residues R178 and R232 each coordinate L-aspartate. The carbamoyl phosphate site is built by G273 and P274.

It belongs to the aspartate/ornithine carbamoyltransferase superfamily. ATCase family. In terms of assembly, heterododecamer (2C3:3R2) of six catalytic PyrB chains organized as two trimers (C3), and six regulatory PyrI chains organized as three dimers (R2).

It carries out the reaction carbamoyl phosphate + L-aspartate = N-carbamoyl-L-aspartate + phosphate + H(+). It functions in the pathway pyrimidine metabolism; UMP biosynthesis via de novo pathway; (S)-dihydroorotate from bicarbonate: step 2/3. Functionally, catalyzes the condensation of carbamoyl phosphate and aspartate to form carbamoyl aspartate and inorganic phosphate, the committed step in the de novo pyrimidine nucleotide biosynthesis pathway. In Parvibaculum lavamentivorans (strain DS-1 / DSM 13023 / NCIMB 13966), this protein is Aspartate carbamoyltransferase catalytic subunit.